The sequence spans 299 residues: Acetaldehyde dehydrogenase (299 aa).

11–14 (SGNI) lines the NAD(+) pocket. Residue C126 is the Acyl-thioester intermediate of the active site. NAD(+) is bound by residues 157–165 (SAGPGTRAN) and N267.

This sequence belongs to the acetaldehyde dehydrogenase family.

It catalyses the reaction acetaldehyde + NAD(+) + CoA = acetyl-CoA + NADH + H(+). The polypeptide is Acetaldehyde dehydrogenase (Bacillus thuringiensis (strain Al Hakam)).